The following is a 317-amino-acid chain: Protein PXR1 (317 aa).

A G-patch domain is found at Thr-25–Arg-79. The segment at Glu-152–Thr-268 is disordered. Basic and acidic residues predominate over residues Ala-154–Gln-170. The span at Lys-171–Ser-182 shows a compositional bias: basic residues. A compositionally biased stretch (polar residues) spans Arg-192–Pro-219. The span at Ser-224–Arg-236 shows a compositional bias: basic residues.

Belongs to the PINX1 family.

The protein localises to the nucleus. It is found in the nucleolus. In terms of biological role, involved in rRNA-processing at A0, A1 and A2 sites and negatively regulates telomerase. This is Protein PXR1 (PXR1) from Coccidioides immitis (strain RS) (Valley fever fungus).